The following is a 440-amino-acid chain: Phosphatidylglycerol--prolipoprotein diacylglyceryl transferase (440 aa).

4 helical membrane passes run 21-41, 53-73, 96-116, and 122-142; these read VPIR…LLIG, GVIY…GRLY, IWDG…GAWI, and GIPL…AQAI. R144 contributes to the a 1,2-diacyl-sn-glycero-3-phospho-(1'-sn-glycerol) binding site. A run of 2 helical transmembrane segments spans residues 189 to 209 and 256 to 276; these read VALV…LIFV and INSF…MAAP. Residues 280–440 form a disordered region; that stretch reads EDPESLRGNQ…ARLRDRLSGR (161 aa). Residues 299 to 330 are compositionally biased toward low complexity; that stretch reads EPATVAATTEAATEGVAAPADGAEAAGADATA. A compositionally biased stretch (basic and acidic residues) spans 332-346; the sequence is RPEESAEPDVEKPES. Over residues 347-417 the composition is skewed to acidic residues; that stretch reads EETEAEAAEE…PEQPVAEEPE (71 aa). Positions 424 to 440 are enriched in basic and acidic residues; sequence ETKRRWGARLRDRLSGR.

This sequence belongs to the Lgt family.

The protein localises to the cell membrane. The enzyme catalyses L-cysteinyl-[prolipoprotein] + a 1,2-diacyl-sn-glycero-3-phospho-(1'-sn-glycerol) = an S-1,2-diacyl-sn-glyceryl-L-cysteinyl-[prolipoprotein] + sn-glycerol 1-phosphate + H(+). It functions in the pathway protein modification; lipoprotein biosynthesis (diacylglyceryl transfer). In terms of biological role, catalyzes the transfer of the diacylglyceryl group from phosphatidylglycerol to the sulfhydryl group of the N-terminal cysteine of a prolipoprotein, the first step in the formation of mature lipoproteins. This is Phosphatidylglycerol--prolipoprotein diacylglyceryl transferase from Mycobacterium avium (strain 104).